A 143-amino-acid chain; its full sequence is QDPYVKEAENLKKYFNAGHSDVADNGTLFLGILKNWKEESDRKIMQSQIVSFYFKLFKNFKDDQSIQKSVETIKEDMNVKFFNSNKKKRDDFEKLTNYSVTDLNVQRKAIHELIQVMAELSPAVKTGKRKRSQMLFRGRRASQ.

At Gln-1 the chain carries Pyrrolidone carboxylic acid. 2 N-linked (GlcNAc...) asparagine glycosylation sites follow: Asn-25 and Asn-97.

This sequence belongs to the type II (or gamma) interferon family. In terms of assembly, homodimer. Interacts with IFNGR1 (via extracellular domain); this interaction promotes IFNGR1 dimerization.

The protein resides in the secreted. Its function is as follows. Type II interferon produced by immune cells such as T-cells and NK cells that plays crucial roles in antimicrobial, antiviral, and antitumor responses by activating effector immune cells and enhancing antigen presentation. Primarily signals through the JAK-STAT pathway after interaction with its receptor IFNGR1 to affect gene regulation. Upon IFNG binding, IFNGR1 intracellular domain opens out to allow association of downstream signaling components JAK2, JAK1 and STAT1, leading to STAT1 activation, nuclear translocation and transcription of IFNG-regulated genes. Many of the induced genes are transcription factors such as IRF1 that are able to further drive regulation of a next wave of transcription. Plays a role in class I antigen presentation pathway by inducing a replacement of catalytic proteasome subunits with immunoproteasome subunits. In turn, increases the quantity, quality, and repertoire of peptides for class I MHC loading. Increases the efficiency of peptide generation also by inducing the expression of activator PA28 that associates with the proteasome and alters its proteolytic cleavage preference. Up-regulates as well MHC II complexes on the cell surface by promoting expression of several key molecules such as cathepsins B/CTSB, H/CTSH, and L/CTSL. Participates in the regulation of hematopoietic stem cells during development and under homeostatic conditions by affecting their development, quiescence, and differentiation. The protein is Interferon gamma (IFNG) of Pan troglodytes (Chimpanzee).